The primary structure comprises 137 residues: Large ribosomal subunit protein uL16 (137 aa).

Belongs to the universal ribosomal protein uL16 family. Part of the 50S ribosomal subunit.

Its function is as follows. Binds 23S rRNA and is also seen to make contacts with the A and possibly P site tRNAs. This is Large ribosomal subunit protein uL16 from Nitrobacter hamburgensis (strain DSM 10229 / NCIMB 13809 / X14).